A 324-amino-acid chain; its full sequence is Beta-ketoacyl-[acyl-carrier-protein] synthase III (324 aa).

Residues Cys112 and His249 contribute to the active site. Positions 250 to 254 (QANRR) are ACP-binding. Asn279 is a catalytic residue.

It belongs to the thiolase-like superfamily. FabH family. In terms of assembly, homodimer.

It localises to the cytoplasm. It catalyses the reaction malonyl-[ACP] + acetyl-CoA + H(+) = 3-oxobutanoyl-[ACP] + CO2 + CoA. It functions in the pathway lipid metabolism; fatty acid biosynthesis. Its function is as follows. Catalyzes the condensation reaction of fatty acid synthesis by the addition to an acyl acceptor of two carbons from malonyl-ACP. Catalyzes the first condensation reaction which initiates fatty acid synthesis and may therefore play a role in governing the total rate of fatty acid production. Possesses both acetoacetyl-ACP synthase and acetyl transacylase activities. Its substrate specificity determines the biosynthesis of branched-chain and/or straight-chain of fatty acids. The polypeptide is Beta-ketoacyl-[acyl-carrier-protein] synthase III (Streptococcus pyogenes serotype M3 (strain ATCC BAA-595 / MGAS315)).